Consider the following 152-residue polypeptide: Putative aluminum-activated malate transporter 11 (152 aa).

Helical transmembrane passes span valine 48–glutamate 68 and alanine 78–leucine 98.

This sequence belongs to the aromatic acid exporter (TC 2.A.85) family.

It localises to the membrane. In terms of biological role, malate transporter. The protein is Putative aluminum-activated malate transporter 11 (ALMT11) of Arabidopsis thaliana (Mouse-ear cress).